The sequence spans 673 residues: Bifunctional lycopene cyclase/phytoene synthase (673 aa).

The segment at 1–251 (MTALAYYQIH…IVLGLSACDH (251 aa)) is lycopene beta-cyclase. The next 7 membrane-spanning stretches (helical) occupy residues 9 to 29 (IHLI…SPIL), 36 to 56 (KISI…SWII), 81 to 101 (YEEY…YVLA), 117 to 137 (SALS…LFTA), 157 to 177 (LSLL…EYAF), 187 to 207 (TIAA…VAVG), and 226 to 246 (VLPI…VLGL). The phytoene synthase stretch occupies residues 258–673 (LHGRTIYGNK…SVVMSGWEGQ (416 aa)). The interval 376 to 399 (KILSSPLLPPSHPSRPTGMYPLPP) is disordered.

It in the N-terminal section; belongs to the lycopene beta-cyclase family. The protein in the C-terminal section; belongs to the phytoene/squalene synthase family.

It is found in the membrane. It catalyses the reaction all-trans-lycopene = gamma-carotene. The catalysed reaction is gamma-carotene = all-trans-beta-carotene. The enzyme catalyses 2 (2E,6E,10E)-geranylgeranyl diphosphate = 15-cis-phytoene + 2 diphosphate. It participates in carotenoid biosynthesis; beta-carotene biosynthesis. It functions in the pathway carotenoid biosynthesis; phytoene biosynthesis; all-trans-phytoene from geranylgeranyl diphosphate: step 1/1. Its function is as follows. Bifunctional enzyme that catalyzes the reactions from geranylgeranyl diphosphate to phytoene (phytoene synthase) and lycopene to beta-carotene via the intermediate gamma-carotene (lycopene cyclase). The cyclase preferentially catalyzes the symmetric cyclization of both ends of the substrate to produce dicyclic carotenoids. Beta-carotene is further processed to the acidic carotenoid astaxanthin. In Phaffia rhodozyma (Yeast), this protein is Bifunctional lycopene cyclase/phytoene synthase.